A 78-amino-acid chain; its full sequence is Small ribosomal subunit protein uS15 (78 aa).

It belongs to the universal ribosomal protein uS15 family. As to quaternary structure, part of the 30S ribosomal subunit. Forms a bridge to the 50S subunit in the 70S ribosome, contacting the 23S rRNA.

Its function is as follows. One of the primary rRNA binding proteins, it binds directly to 16S rRNA where it helps nucleate assembly of the platform of the 30S subunit by binding and bridging several RNA helices of the 16S rRNA. In terms of biological role, forms an intersubunit bridge (bridge B4) with the 23S rRNA of the 50S subunit in the ribosome. The chain is Small ribosomal subunit protein uS15 from Karelsulcia muelleri (strain GWSS) (Sulcia muelleri).